Consider the following 303-residue polypeptide: Protoheme IX farnesyltransferase (303 aa).

Helical transmembrane passes span 25-45 (MGLV…AIVM), 54-74 (IPQI…ACAL), 118-138 (CLFL…VGYV), 166-186 (IGWV…FLVV), 230-250 (LVLL…FVVI), and 280-300 (FVYS…VSLI).

It belongs to the UbiA prenyltransferase family. Protoheme IX farnesyltransferase subfamily. As to quaternary structure, interacts with CtaA.

The protein localises to the cell membrane. The catalysed reaction is heme b + (2E,6E)-farnesyl diphosphate + H2O = Fe(II)-heme o + diphosphate. Its pathway is porphyrin-containing compound metabolism; heme O biosynthesis; heme O from protoheme: step 1/1. Converts heme B (protoheme IX) to heme O by substitution of the vinyl group on carbon 2 of heme B porphyrin ring with a hydroxyethyl farnesyl side group. This chain is Protoheme IX farnesyltransferase, found in Staphylococcus epidermidis (strain ATCC 35984 / DSM 28319 / BCRC 17069 / CCUG 31568 / BM 3577 / RP62A).